The chain runs to 485 residues: Cysteine--tRNA ligase (485 aa).

Residue Cys28 coordinates Zn(2+). The 'HIGH' region signature appears at Met30–His40. 3 residues coordinate Zn(2+): Cys209, His234, and Glu238. The 'KMSKS' region signature appears at Lys266–Ser270. Lys269 is an ATP binding site.

It belongs to the class-I aminoacyl-tRNA synthetase family. In terms of assembly, monomer. It depends on Zn(2+) as a cofactor.

It is found in the cytoplasm. It carries out the reaction tRNA(Cys) + L-cysteine + ATP = L-cysteinyl-tRNA(Cys) + AMP + diphosphate. The sequence is that of Cysteine--tRNA ligase from Nitrosococcus oceani (strain ATCC 19707 / BCRC 17464 / JCM 30415 / NCIMB 11848 / C-107).